Reading from the N-terminus, the 408-residue chain is Histidine--tRNA ligase (408 aa).

Belongs to the class-II aminoacyl-tRNA synthetase family. In terms of assembly, homodimer.

The protein resides in the cytoplasm. It catalyses the reaction tRNA(His) + L-histidine + ATP = L-histidyl-tRNA(His) + AMP + diphosphate + H(+). The polypeptide is Histidine--tRNA ligase (Wolbachia pipientis wMel).